A 201-amino-acid polypeptide reads, in one-letter code: 3-isopropylmalate dehydratase small subunit (201 aa).

The protein belongs to the LeuD family. LeuD type 1 subfamily. In terms of assembly, heterodimer of LeuC and LeuD.

The catalysed reaction is (2R,3S)-3-isopropylmalate = (2S)-2-isopropylmalate. It functions in the pathway amino-acid biosynthesis; L-leucine biosynthesis; L-leucine from 3-methyl-2-oxobutanoate: step 2/4. Functionally, catalyzes the isomerization between 2-isopropylmalate and 3-isopropylmalate, via the formation of 2-isopropylmaleate. This Jannaschia sp. (strain CCS1) protein is 3-isopropylmalate dehydratase small subunit.